Reading from the N-terminus, the 301-residue chain is MKLSGVFTALATPFRDDLSLDERALASFVDWQISSGISGIVPCGTTGESATLNFEEYCTVVRLCIETARGRILVIAGAGSHCTTETISRALFVQSAGADAALIVVPYYNRPSDEGVYQHFRAVHDATNIPIVLYNVPQRTAIDISNDTIRRIAELPRVVGIKDCTGAERVAALKAILPEKVAILSGEDETALASYMNGGSGCISVVSNVAPKMAVELYRLHALGKINMAKQVSGNLAALSRVLFIEPSPSPTKYALSLMGKMRPKVRLPLVELTSSGQTAVKNVLETLDLLRQQKAMHSQL.

Pyruvate is bound at residue threonine 46. Residue tyrosine 134 is the Proton donor/acceptor of the active site. Residue lysine 162 is the Schiff-base intermediate with substrate of the active site. Position 203 (isoleucine 203) interacts with pyruvate.

The protein belongs to the DapA family. As to quaternary structure, homotetramer; dimer of dimers.

It is found in the cytoplasm. It carries out the reaction L-aspartate 4-semialdehyde + pyruvate = (2S,4S)-4-hydroxy-2,3,4,5-tetrahydrodipicolinate + H2O + H(+). Its pathway is amino-acid biosynthesis; L-lysine biosynthesis via DAP pathway; (S)-tetrahydrodipicolinate from L-aspartate: step 3/4. In terms of biological role, catalyzes the condensation of (S)-aspartate-beta-semialdehyde [(S)-ASA] and pyruvate to 4-hydroxy-tetrahydrodipicolinate (HTPA). The protein is 4-hydroxy-tetrahydrodipicolinate synthase of Anaplasma marginale (strain Florida).